We begin with the raw amino-acid sequence, 1055 residues long: Elongation factor 3 (1055 aa).

Val-45 lines the ADP pocket. HEAT repeat units lie at residues 45–86, 96–133, 135–172, 175–213, 217–255, 257–290, and 295–337; these read VEFF…NGAA, SAEN…SMNP, ASFV…SAPY, GEAM…LVEN, EKFV…APTI, LIAP…LVDS, and RPFL…VPVE. ABC transporter domains lie at 447 to 659 and 687 to 1004; these read CNIE…SYYQ and LKMR…KKAG. Positions 723, 933, 936, and 962 each coordinate ADP. 2 disordered regions span residues 987–1006 and 1024–1055; these read HNWV…AGDD and EKKL…DEEL. Basic residues predominate over residues 1033 to 1044; that stretch reads RKAKKDRMARRK.

The protein belongs to the ABC transporter superfamily. ABCF family. EF3 subfamily. As to quaternary structure, associates with ribosomes.

Its subcellular location is the cytoplasm. It is found in the cytosol. The catalysed reaction is ATP + H2O = ADP + phosphate + H(+). It participates in protein biosynthesis; polypeptide chain elongation. Ribosome-dependent ATPase that functions in cytoplasmic translation elongation. Required for the ATP-dependent release of deacylated tRNA from the ribosomal E-site during protein biosynthesis. Stimulates the eEF1A-dependent binding of aminoacyl-tRNA to the ribosomal A-site, which has reduced affinity for tRNA as long as the E-site is occupied. Assists translation termination by stimulating the release of nascent protein from the ribosome by release factors. Appears to target calcium-channel protein CCH1 to the plasma membrane. The protein is Elongation factor 3 of Cryptococcus neoformans var. neoformans serotype D (strain JEC21 / ATCC MYA-565) (Filobasidiella neoformans).